We begin with the raw amino-acid sequence, 437 residues long: ATP-dependent protease ATPase subunit HslU (437 aa).

ATP is bound by residues valine 18, 60–65, aspartate 249, glutamate 315, and arginine 387; that span reads GVGKTE.

This sequence belongs to the ClpX chaperone family. HslU subfamily. As to quaternary structure, a double ring-shaped homohexamer of HslV is capped on each side by a ring-shaped HslU homohexamer. The assembly of the HslU/HslV complex is dependent on binding of ATP.

The protein localises to the cytoplasm. ATPase subunit of a proteasome-like degradation complex; this subunit has chaperone activity. The binding of ATP and its subsequent hydrolysis by HslU are essential for unfolding of protein substrates subsequently hydrolyzed by HslV. HslU recognizes the N-terminal part of its protein substrates and unfolds these before they are guided to HslV for hydrolysis. In Rhodospirillum centenum (strain ATCC 51521 / SW), this protein is ATP-dependent protease ATPase subunit HslU.